The following is a 517-amino-acid chain: Alpha,alpha-trehalose-phosphate synthase [UDP-forming] 1 (517 aa).

2 residues coordinate D-glucose 6-phosphate: Tyr98 and Asp152. Residues Arg288 and Lys293 each coordinate UDP. The UDP-alpha-D-glucose site is built by Arg288 and Lys293. A D-glucose 6-phosphate-binding site is contributed by Arg326. Position 387-395 (387-395 (DGMNLVAYE)) interacts with UDP-alpha-D-glucose. 391–395 (LVAYE) contacts UDP. A disordered region spans residues 486-517 (FHAKKASFSDNNSENGEPSNGVETPAQEQVAQ). The segment covering 493-517 (FSDNNSENGEPSNGVETPAQEQVAQ) has biased composition (polar residues).

Belongs to the glycosyltransferase 20 family.

It catalyses the reaction D-glucose 6-phosphate + UDP-alpha-D-glucose = alpha,alpha-trehalose 6-phosphate + UDP + H(+). It participates in carbohydrate biosynthesis. Functionally, synthase catalytic subunit of the trehalose synthase complex that catalyzes the production of trehalose from glucose-6-phosphate and UDP-alpha-D-glucose in a two step process. The chain is Alpha,alpha-trehalose-phosphate synthase [UDP-forming] 1 from Aspergillus niger.